A 224-amino-acid polypeptide reads, in one-letter code: UPF0111 protein TC_0063 (224 aa).

Belongs to the UPF0111 family.

This Chlamydia muridarum (strain MoPn / Nigg) protein is UPF0111 protein TC_0063.